We begin with the raw amino-acid sequence, 238 residues long: Urease subunit alpha (238 aa).

The segment at 1–102 is urease gamma; that stretch reads MKLTPKELDK…LVTVHTPIEA (102 aa). Residues 103 to 238 are urease beta; the sequence is NGKLVPGELF…DDNYVKTIKE (136 aa).

The protein in the N-terminal section; belongs to the urease gamma subunit family. In the C-terminal section; belongs to the urease beta subunit family. In terms of assembly, heterohexamer of 3 UreA (alpha) and 3 UreB (beta) subunits. Four heterohexamers assemble to form a 16 nm dodecameric complex.

The enzyme catalyses urea + 2 H2O + H(+) = hydrogencarbonate + 2 NH4(+). Its pathway is nitrogen metabolism; urea degradation; CO(2) and NH(3) from urea (urease route): step 1/1. The sequence is that of Urease subunit alpha from Helicobacter pylori (strain J99 / ATCC 700824) (Campylobacter pylori J99).